The sequence spans 410 residues: Peptidase T (410 aa).

Residue H79 coordinates Zn(2+). D81 is an active-site residue. D142 contacts Zn(2+). Catalysis depends on E176, which acts as the Proton acceptor. The Zn(2+) site is built by E177, D199, and H381.

The protein belongs to the peptidase M20B family. Zn(2+) serves as cofactor.

Its subcellular location is the cytoplasm. The catalysed reaction is Release of the N-terminal residue from a tripeptide.. Cleaves the N-terminal amino acid of tripeptides. The chain is Peptidase T from Geobacillus sp. (strain WCH70).